An 833-amino-acid chain; its full sequence is Leucine--tRNA ligase (833 aa).

Residues Pro-41–His-52 carry the 'HIGH' region motif. A 'KMSKS' region motif is present at residues Lys-610–Ser-614. Lys-613 is a binding site for ATP.

This sequence belongs to the class-I aminoacyl-tRNA synthetase family.

Its subcellular location is the cytoplasm. The catalysed reaction is tRNA(Leu) + L-leucine + ATP = L-leucyl-tRNA(Leu) + AMP + diphosphate. The chain is Leucine--tRNA ligase from Streptococcus suis (strain 98HAH33).